Consider the following 127-residue polypeptide: Protein FAM229A (127 aa).

Positions Met1–Leu96 are disordered. Low complexity predominate over residues Arg24–Pro39.

Belongs to the FAM229 family.

The sequence is that of Protein FAM229A (FAM229A) from Homo sapiens (Human).